We begin with the raw amino-acid sequence, 440 residues long: Translation initiation factor eIF2B subunit gamma (440 aa).

It belongs to the eIF-2B gamma/epsilon subunits family. In terms of assembly, component of the translation initiation factor 2B (eIF2B) complex which is a heterodecamer of two sets of five different subunits: alpha, beta, gamma, delta and epsilon. Subunits alpha, beta and delta comprise a regulatory subcomplex and subunits epsilon and gamma comprise a catalytic subcomplex. Within the complex, the hexameric regulatory complex resides at the center, with the two heterodimeric catalytic subcomplexes bound on opposite sides.

The protein resides in the cytoplasm. It is found in the cytosol. Its function is as follows. Acts as a component of the translation initiation factor 2B (eIF2B) complex, which catalyzes the exchange of GDP for GTP on the eukaryotic initiation factor 2 (eIF2) complex gamma subunit. Its guanine nucleotide exchange factor activity is repressed when bound to eIF2 complex phosphorylated on the alpha subunit, thereby limiting the amount of methionyl-initiator methionine tRNA available to the ribosome and consequently global translation is repressed. The protein is Translation initiation factor eIF2B subunit gamma (eif2b3) of Dictyostelium discoideum (Social amoeba).